Reading from the N-terminus, the 29-residue chain is Cytochrome b6-f complex subunit 8 (29 aa).

Residues 3–23 (ILTLGWVSILALFTWSIAMVV) traverse the membrane as a helical segment.

This sequence belongs to the PetN family. As to quaternary structure, the 4 large subunits of the cytochrome b6-f complex are cytochrome b6, subunit IV (17 kDa polypeptide, PetD), cytochrome f and the Rieske protein, while the 4 small subunits are PetG, PetL, PetM and PetN. The complex functions as a dimer.

The protein resides in the cellular thylakoid membrane. Functionally, component of the cytochrome b6-f complex, which mediates electron transfer between photosystem II (PSII) and photosystem I (PSI), cyclic electron flow around PSI, and state transitions. This Microcystis aeruginosa (strain NIES-843 / IAM M-2473) protein is Cytochrome b6-f complex subunit 8.